The following is a 167-amino-acid chain: MAASCPCGSNRTYALCCEIAHKHHANVITPEQLMRSRYSAHVLGLVDYVVNTYHPSCHAEEQREGIAESIENDWCKLEVVKAEAGSNENEGFVEFNAYFDEDGKRYCMTERSRFVKEDGLWYYIDGTFPEEEPEQDPRLNQSVSSLKVGRNDPCICGSGKKFKKCCG.

Belongs to the UPF0225 family.

The protein is UPF0225 protein VV1358 of Vibrio vulnificus (strain YJ016).